Consider the following 180-residue polypeptide: Large ribosomal subunit protein uL5 (180 aa).

It belongs to the universal ribosomal protein uL5 family. In terms of assembly, part of the 50S ribosomal subunit; part of the 5S rRNA/L5/L18/L25 subcomplex. Contacts the 5S rRNA and the P site tRNA. Forms a bridge to the 30S subunit in the 70S ribosome.

This is one of the proteins that bind and probably mediate the attachment of the 5S RNA into the large ribosomal subunit, where it forms part of the central protuberance. In the 70S ribosome it contacts protein S13 of the 30S subunit (bridge B1b), connecting the 2 subunits; this bridge is implicated in subunit movement. Contacts the P site tRNA; the 5S rRNA and some of its associated proteins might help stabilize positioning of ribosome-bound tRNAs. The chain is Large ribosomal subunit protein uL5 from Chlamydia abortus (strain DSM 27085 / S26/3) (Chlamydophila abortus).